The sequence spans 591 residues: V-type ATP synthase alpha chain (591 aa).

233 to 240 (GPFGAGKT) is a binding site for ATP.

The protein belongs to the ATPase alpha/beta chains family.

It catalyses the reaction ATP + H2O + 4 H(+)(in) = ADP + phosphate + 5 H(+)(out). In terms of biological role, produces ATP from ADP in the presence of a proton gradient across the membrane. The V-type alpha chain is a catalytic subunit. The polypeptide is V-type ATP synthase alpha chain (Streptococcus pyogenes serotype M5 (strain Manfredo)).